The chain runs to 313 residues: Guanine nucleotide-binding protein-like 3-like protein (313 aa).

Positions 1 to 14 (MGIKKKRQSKRLTT) are enriched in basic residues. Residues 1–41 (MGIKKKRQSKRLTTRKREGMLKRARANERKKRRMDRKMQAK) form a disordered region. Residues 15 to 27 (RKREGMLKRARAN) are compositionally biased toward basic and acidic residues. Residues 95 to 98 (SKSD), 178 to 185 (GNPGSGKN), and 212 to 215 (TLSS) contribute to the GTP site.

It belongs to the MMR1/HSR1 GTP-binding protein family.

The protein localises to the nucleus. The protein resides in the nucleolus. Its function is as follows. Required for normal processing of ribosomal pre-rRNA. Required for cell proliferation. Binds GTP. The protein is Guanine nucleotide-binding protein-like 3-like protein of Encephalitozoon cuniculi (strain GB-M1) (Microsporidian parasite).